The following is a 315-amino-acid chain: Glutathione synthetase (315 aa).

One can recognise an ATP-grasp domain in the interval 125–310 (KLYTAWFADL…ITGMLMDAIE (186 aa)). Residue 151 to 207 (WEKHGDIIMKPLDGMGGASIFRVKEGDPNIGVIAETLTELGNRYCMAQNYLPAIKDG) coordinates ATP. The Mg(2+) site is built by E281 and N283.

It belongs to the prokaryotic GSH synthase family. The cofactor is Mg(2+). Mn(2+) is required as a cofactor.

The enzyme catalyses gamma-L-glutamyl-L-cysteine + glycine + ATP = glutathione + ADP + phosphate + H(+). It participates in sulfur metabolism; glutathione biosynthesis; glutathione from L-cysteine and L-glutamate: step 2/2. In Salmonella typhimurium (strain LT2 / SGSC1412 / ATCC 700720), this protein is Glutathione synthetase.